A 122-amino-acid chain; its full sequence is UPF0382 membrane protein SAUSA300_0565 (122 aa).

4 consecutive transmembrane segments (helical) span residues 3 to 23 (LFIILGALNAMMAVGTGAFGA), 46 to 66 (MYHGLALLIIGVISGTTSINV), 69 to 89 (AGWLIFAGIIFFSGSLYILVL), and 98 to 118 (ITPIGGVLFIIGWIMLIIATF).

The protein belongs to the UPF0382 family.

It is found in the cell membrane. The protein is UPF0382 membrane protein SAUSA300_0565 of Staphylococcus aureus (strain USA300).